The following is a 260-amino-acid chain: 3-dehydroquinate dehydratase (260 aa).

Residues 50-52 (EWR) and Arg-86 contribute to the 3-dehydroquinate site. The active-site Proton donor/acceptor is the His-148. The active-site Schiff-base intermediate with substrate is Lys-175. Arg-217, Ser-236, and Gln-240 together coordinate 3-dehydroquinate.

It belongs to the type-I 3-dehydroquinase family. As to quaternary structure, homodimer.

It carries out the reaction 3-dehydroquinate = 3-dehydroshikimate + H2O. It participates in metabolic intermediate biosynthesis; chorismate biosynthesis; chorismate from D-erythrose 4-phosphate and phosphoenolpyruvate: step 3/7. Involved in the third step of the chorismate pathway, which leads to the biosynthesis of aromatic amino acids. Catalyzes the cis-dehydration of 3-dehydroquinate (DHQ) and introduces the first double bond of the aromatic ring to yield 3-dehydroshikimate. The sequence is that of 3-dehydroquinate dehydratase from Aromatoleum aromaticum (strain DSM 19018 / LMG 30748 / EbN1) (Azoarcus sp. (strain EbN1)).